Consider the following 20-residue polypeptide: GMP synthase [glutamine-hydrolyzing] (20 aa).

The 20-residue stretch at 1–20 folds into the GMPS ATP-PPase domain; the sequence is ALGDQLLSVFVDHTLVDEVA.

Homodimer.

The catalysed reaction is XMP + L-glutamine + ATP + H2O = GMP + L-glutamate + AMP + diphosphate + 2 H(+). It participates in purine metabolism; GMP biosynthesis; GMP from XMP (L-Gln route): step 1/1. Its function is as follows. Catalyzes the synthesis of GMP from XMP. The chain is GMP synthase [glutamine-hydrolyzing] (guaA) from Fructilactobacillus sanfranciscensis (Lactobacillus sanfranciscensis).